The sequence spans 192 residues: uncharacterized protein (192 aa).

Positions 29-160 (QRQAAVLVPI…PLDIHRRGND (132 aa)) constitute a Nudix hydrolase domain. The Nudix box signature appears at 67–89 (GAVDNTDATLIAAALREAQEEVA). Glu-83 and Glu-87 together coordinate Mg(2+).

The protein belongs to the Nudix hydrolase family. PCD1 subfamily. It depends on Mn(2+) as a cofactor. Mg(2+) serves as cofactor.

Functionally, probably mediates the hydrolysis of some nucleoside diphosphate derivatives. This is an uncharacterized protein from Klebsiella pneumoniae (strain 342).